We begin with the raw amino-acid sequence, 409 residues long: Argininosuccinate synthase (409 aa).

Residues 8–16 (AYSGGLDTS) and Ala-34 contribute to the ATP site. Tyr-85 contacts L-citrulline. Gly-115 provides a ligand contact to ATP. L-aspartate-binding residues include Thr-117, Asn-121, and Asp-122. Asn-121 serves as a coordination point for L-citrulline. L-citrulline-binding residues include Arg-125, Ser-178, Ser-187, Glu-268, and Tyr-280.

It belongs to the argininosuccinate synthase family. Type 1 subfamily. Homotetramer.

The protein localises to the cytoplasm. It catalyses the reaction L-citrulline + L-aspartate + ATP = 2-(N(omega)-L-arginino)succinate + AMP + diphosphate + H(+). It participates in amino-acid biosynthesis; L-arginine biosynthesis; L-arginine from L-ornithine and carbamoyl phosphate: step 2/3. The protein is Argininosuccinate synthase of Thermotoga sp. (strain RQ2).